A 341-amino-acid polypeptide reads, in one-letter code: Putative MAGE domain-containing protein MAGEA13P (341 aa).

2 disordered regions span residues 1–21 (MPHS…APKE) and 78–101 (KATP…GASQ). The segment covering 87-97 (ESSRSQEKKDP) has biased composition (basic and acidic residues). The region spanning 105 to 304 (LEKKVDELVK…SSFPLLYEEA (200 aa)) is the MAGE domain.

This is Putative MAGE domain-containing protein MAGEA13P (MAGEA13P) from Homo sapiens (Human).